The primary structure comprises 175 residues: uncharacterized protein (175 aa).

The tract at residues A113–L175 is disordered.

This is an uncharacterized protein from Bos taurus (Bovine).